Consider the following 779-residue polypeptide: Transcriptional regulator QRICH1 (779 aa).

Methionine 1 carries the N-acetylmethionine modification. Positions 6–48 (ENTISFEEYIRVKARSVPQHRMKEFLDSLASKGPEALQEFQQT) constitute a CARD domain. Disordered stretches follow at residues 141-163 (QGQA…PSPS) and 219-242 (ALSP…TASV). Serine 346 bears the Phosphoserine mark. Residues lysine 354 and lysine 359 each participate in a glycyl lysine isopeptide (Lys-Gly) (interchain with G-Cter in SUMO2) cross-link. Positions 420-430 (QQQPQQQTPQE) are enriched in low complexity. The disordered stretch occupies residues 420 to 443 (QQQPQQQTPQEQTPPPPQQQQQQQ). Serine 467 is subject to Phosphoserine.

It localises to the nucleus. It is found in the cytoplasm. The protein resides in the cell membrane. In terms of biological role, transcriptional regulator that acts as a mediator of the integrated stress response (ISR) through transcriptional control of protein homeostasis under conditions of ER stress. Controls the outcome of the unfolded protein response (UPR), an ER-stress response pathway that either promotes recovery of ER homeostasis and cell survival, or triggers the terminal UPR which elicits programmed cell death when ER stress is prolonged and unresolved. ER stress induces QRICH1 translation by a ribosome translation re-initiation mechanism in response to EIF2S1/eIF-2-alpha phosphorylation, and stress-induced QRICH1 regulates a transcriptional program associated with protein translation, protein secretion-mediated proteotoxicity and cell death during the terminal UPR. May cooperate with ATF4 transcription factor signaling to regulate ER homeostasis which is critical for cell viability. Up-regulates CASP3/caspase-3 activity in epithelial cells under ER stress. Central regulator of proteotoxicity associated with ER stress-mediated inflammatory diseases in the intestines and liver. Involved in chondrocyte hypertrophy, a process required for normal longitudinal bone growth. This is Transcriptional regulator QRICH1 (QRICH1) from Bos taurus (Bovine).